Reading from the N-terminus, the 133-residue chain is Large ribosomal subunit protein uL15 (133 aa).

The segment at 1-60 (MALENLKPAQGSTKDRKRVGRGQGSGMGKTSTRGGKGQTARTGYKAKRGFEGGQQPLQRR) is disordered.

This sequence belongs to the universal ribosomal protein uL15 family. As to quaternary structure, part of the 50S ribosomal subunit.

Its function is as follows. Binds to the 23S rRNA. This is Large ribosomal subunit protein uL15 from Wolinella succinogenes (strain ATCC 29543 / DSM 1740 / CCUG 13145 / JCM 31913 / LMG 7466 / NCTC 11488 / FDC 602W) (Vibrio succinogenes).